The primary structure comprises 349 residues: Zinc-type alcohol dehydrogenase-like protein PB24D3.08c (349 aa).

The protein belongs to the zinc-containing alcohol dehydrogenase family. Quinone oxidoreductase subfamily.

The protein resides in the cytoplasm. The protein localises to the nucleus. The sequence is that of Zinc-type alcohol dehydrogenase-like protein PB24D3.08c from Schizosaccharomyces pombe (strain 972 / ATCC 24843) (Fission yeast).